Consider the following 579-residue polypeptide: 2-isopropylmalate synthase (579 aa).

Positions 40-314 (PRWCAVDLRD…DPMIDFSDID (275 aa)) constitute a Pyruvate carboxyltransferase domain. Residues D49, H253, H255, and N289 each coordinate Mg(2+). The tract at residues 456–579 (SGKADGQWGR…VNRAIRDAQS (124 aa)) is regulatory domain.

This sequence belongs to the alpha-IPM synthase/homocitrate synthase family. LeuA type 2 subfamily. In terms of assembly, homodimer. Mg(2+) is required as a cofactor.

It localises to the cytoplasm. The catalysed reaction is 3-methyl-2-oxobutanoate + acetyl-CoA + H2O = (2S)-2-isopropylmalate + CoA + H(+). It participates in amino-acid biosynthesis; L-leucine biosynthesis; L-leucine from 3-methyl-2-oxobutanoate: step 1/4. In terms of biological role, catalyzes the condensation of the acetyl group of acetyl-CoA with 3-methyl-2-oxobutanoate (2-ketoisovalerate) to form 3-carboxy-3-hydroxy-4-methylpentanoate (2-isopropylmalate). The protein is 2-isopropylmalate synthase of Pseudarthrobacter chlorophenolicus (strain ATCC 700700 / DSM 12829 / CIP 107037 / JCM 12360 / KCTC 9906 / NCIMB 13794 / A6) (Arthrobacter chlorophenolicus).